The following is a 110-amino-acid chain: Parvalbumin alpha (110 aa).

Ser2 is subject to N-acetylserine. Ser2 and Ser24 each carry phosphoserine. 2 EF-hand domains span residues 39 to 74 (KSAD…FSPD) and 78 to 110 (LSAK…VAES). Ca(2+) is bound by residues Asp52, Asp54, Ser56, Phe58, Glu60, Glu63, Asp91, Asp93, Asp95, Lys97, and Glu102.

Belongs to the parvalbumin family.

Functionally, in muscle, parvalbumin is thought to be involved in relaxation after contraction. It binds two calcium ions. This Macaca fuscata fuscata (Japanese macaque) protein is Parvalbumin alpha (PVALB).